A 510-amino-acid polypeptide reads, in one-letter code: Major facilitator superfamily domain-containing protein 8 (510 aa).

The Cytoplasmic segment spans residues 1-38; that stretch reads MASIDDDDDERTPLLQDSHIGELVETQKQLKSRWWSIR. The Dileucine internalization motif signature appears at 14–15; the sequence is LL. A helical membrane pass occupies residues 39–59; that stretch reads VMYLTMFLSSVGFSIVMTSIW. Topologically, residues 60–72 are extracellular; it reads PYLQKVDQSADAS. The chain crosses the membrane as a helical span at residues 73-93; that stretch reads FLGWVIASFSLGQMVASPLFG. Over 94 to 103 the chain is Cytoplasmic; that stretch reads LWSNHRPRRE. The helical transmembrane segment at 104–124 threads the bilayer; it reads PLVVSITILVAASCLYAYVHV. The Extracellular segment spans residues 125-132; the sequence is PASHNKYY. The helical transmembrane segment at 133-155 threads the bilayer; sequence MLLARTFVGFGSGNVAVVRSYVA. At 156 to 171 the chain is on the cytoplasmic side; sequence GATSLSERTGAMANIS. A helical transmembrane segment spans residues 172 to 192; that stretch reads AFQAMGFILGPAFQAALSVIG. The Extracellular portion of the chain corresponds to 193-209; the sequence is ETGITINGISLQVNMYT. Residues 210–230 form a helical membrane-spanning segment; sequence APALMGALLGIGNIILIFAIF. The Cytoplasmic portion of the chain corresponds to 231–264; it reads REHRVDDLEKNVSSINSESEVTDVEKANEGPIDQ. Residues 265–285 form a helical membrane-spanning segment; the sequence is IAVISSNILFFVVLFVFAIFE. Topologically, residues 286-302 are extracellular; the sequence is TISTPLTMDMYAWTRTQ. Residues 303 to 323 form a helical membrane-spanning segment; it reads AVFYNGIILAAVGVESVIVFL. Residues 324–335 lie on the Cytoplasmic side of the membrane; the sequence is TVKILCKKTGER. Residues 336–356 form a helical membrane-spanning segment; the sequence is VLLLGGLAVIWIGFFILLPWG. The Extracellular portion of the chain corresponds to 357 to 406; the sequence is NQMPKIQWTDLQNATIHNTTQWTSSIPSSGNHSVEPTGCPVIQTWCLYTP. N-linked (GlcNAc...) asparagine glycosylation is found at Asn-369 and Asn-374. Residues 407–427 traverse the membrane as a helical segment; the sequence is VIHLAQYLTSDILIGVGYPIC. Residues 428 to 445 lie on the Cytoplasmic side of the membrane; the sequence is NVMSYTLYSKIIGPKPQG. The chain crosses the membrane as a helical span at residues 446-466; the sequence is LYMGWLTAAGSAARTLGPVFV. The Extracellular portion of the chain corresponds to 467–476; that stretch reads SQIYTHLGTR. A helical transmembrane segment spans residues 477–497; sequence WTFGIICAFVALSLLHLTAVY. Residues 498-510 are Cytoplasmic-facing; the sequence is KRLIPFSTRYERL.

Belongs to the major facilitator superfamily.

The protein resides in the lysosome membrane. In terms of biological role, may be a carrier that transport small solutes by using chemiosmotic ion gradients. The polypeptide is Major facilitator superfamily domain-containing protein 8 (mfsd8) (Xenopus laevis (African clawed frog)).